A 218-amino-acid polypeptide reads, in one-letter code: Large ribosomal subunit protein uL3 (218 aa).

The protein belongs to the universal ribosomal protein uL3 family. Part of the 50S ribosomal subunit. Forms a cluster with proteins L14 and L19.

Its function is as follows. One of the primary rRNA binding proteins, it binds directly near the 3'-end of the 23S rRNA, where it nucleates assembly of the 50S subunit. The polypeptide is Large ribosomal subunit protein uL3 (Corynebacterium diphtheriae (strain ATCC 700971 / NCTC 13129 / Biotype gravis)).